A 138-amino-acid polypeptide reads, in one-letter code: ATP synthase epsilon chain (138 aa).

A compositionally biased stretch (basic and acidic residues) spans 89-114 (KDTAQQEWNEAQKRLDEASKSGDRQK). Positions 89–117 (KDTAQQEWNEAQKRLDEASKSGDRQKQIQ) are disordered.

This sequence belongs to the ATPase epsilon chain family. As to quaternary structure, F-type ATPases have 2 components, CF(1) - the catalytic core - and CF(0) - the membrane proton channel. CF(1) has five subunits: alpha(3), beta(3), gamma(1), delta(1), epsilon(1). CF(0) has three main subunits: a, b and c.

It is found in the cellular thylakoid membrane. In terms of biological role, produces ATP from ADP in the presence of a proton gradient across the membrane. In Gloeothece citriformis (strain PCC 7424) (Cyanothece sp. (strain PCC 7424)), this protein is ATP synthase epsilon chain.